Reading from the N-terminus, the 554-residue chain is Hydroxylamine reductase (554 aa).

[2Fe-2S] cluster is bound by residues Cys3, Cys6, Cys18, and Cys25. Positions 252, 276, 320, 408, 436, 461, 495, and 497 each coordinate hybrid [4Fe-2O-2S] cluster. Residue Cys408 is modified to Cysteine persulfide.

This sequence belongs to the HCP family. [2Fe-2S] cluster serves as cofactor. Requires hybrid [4Fe-2O-2S] cluster as cofactor.

The protein resides in the cytoplasm. The catalysed reaction is A + NH4(+) + H2O = hydroxylamine + AH2 + H(+). In terms of biological role, catalyzes the reduction of hydroxylamine to form NH(3) and H(2)O. The polypeptide is Hydroxylamine reductase (Shewanella baltica (strain OS185)).